The chain runs to 696 residues: MLVVAFASLLGAARAIMMPIDDPTTSDKFQITYANESLWDTLVMKNKTALESGELFDLGPDTKCFLPNMTRLHEQNVQSVNDPEYKQKLIDTLDMGAHIIDASLKNQCLVSQNGFWTYRYCGSGDFTQYHGVAPDPNDKLTYTLGRSSKQIENREFQLLYDDYGYYISEIIESGDICDVTGTPRAIEIQYTCGNVMRPGTLQWTRETKICHYEAQVIVPDLCQLELLSKNQDKKNAVPIICHMSNDVPDKHNIVDIVSNYDVSFVANQVYFLLPMNNSNVDRALLMYTGNATEDGLEMDPFPMEIYKKFIDVMNKMLGLGLLSPPDGKPFDVHDSYQWIGDIVDMHGNYLNRLRLDVDVNMEATLIIDKSINFTGPNNFQWYFRGSDRTKNSKSRFGSLTNDNMMLAGGSIINVDDISKENAQELLEKLVAAGKLSGVIEDNKITQGSPIEASKTKVTKASESTPVSEKNKKAKTVTKTIIRSRDKEEYFKENEKQGEENNAQVPFSAHNNEQHGTISKSERKEENTNQKQLANTQKGDTDTPPQSSQSSANDKLSRSGMGQKEPGVDEIGSELRGNSKKALGSNIDNSSGRSTLNDNSDRIAVENEAREIINSNAYDQSEASVDPNYRNDQQRLNSAKEHTFSQSKEKKSINSEEILETKILNSETLGNNDGVASDVKDEEVVESDRNGVIDDEL.

An N-terminal signal peptide occupies residues M1–A15. Residues N35, N46, and N68 are each glycosylated (N-linked (GlcNAc...) asparagine). Residues N106–L224 enclose the MRH domain. C108 and C121 are oxidised to a cystine. A mannooligosaccharide derivative-binding residues include W116, Q128, D178, R184, E206, and Y212. Intrachain disulfides connect C177/C210 and C192/C222. 3 N-linked (GlcNAc...) asparagine glycosylation sites follow: N276, N290, and N372. Disordered regions lie at residues I450–D600 and T667–L696. A compositionally biased stretch (polar residues) spans T458–S467. Positions R482–E498 are enriched in basic and acidic residues. Composition is skewed to polar residues over residues E499–S518, N528–D553, and N585–D597. N588 carries an N-linked (GlcNAc...) asparagine glycan. Residues E685–L696 are compositionally biased toward basic and acidic residues.

Belongs to the OS-9 family. Interacts with missfolded ER lumenal proteins.

It localises to the endoplasmic reticulum membrane. In terms of biological role, lectin involved in the quality control of the secretory pathway. As a member of the endoplasmic reticulum-associated degradation lumenal (ERAD-L) surveillance system, targets misfolded endoplasmic reticulum lumenal glycoproteins for degradation. In Candida glabrata (strain ATCC 2001 / BCRC 20586 / JCM 3761 / NBRC 0622 / NRRL Y-65 / CBS 138) (Yeast), this protein is Protein OS-9 homolog (YOS9).